The sequence spans 241 residues: MSDWSLSQLFASLHEDIQLRLGTARKAFQHPGAKGDASEGVWIEMLDTYLPKRYQAANAFVVDSLGNFSDQIDVVVFDRQYSPFIFKFNEQIIVPAESVYAVFEAKQSASADLVAYAQRKVASVRRLHRTSLPIPHAGGTYPAKPLIPILGGLLTFESDWSPALGMSFDKALNGDLSDGRLDMGCVASHGHFYFNNIDSKFNFEHGNKPATAFLFRLIAQLQFSGTVPMIDIDAYGKWLAN.

Catalysis depends on residues aspartate 73, glutamate 104, and lysine 106. Mg(2+)-binding residues include aspartate 73 and glutamate 104.

This sequence belongs to the NucC endonuclease family. Self-oligomerizes. Forms homotrimers; in the presence of cAAA the trimers associate face-to-face to form homohexamers. The 2 cAAA-binding sites are on the exterior of the hexamer at the three-way junction, there are maximally 2 cyclic nucleotides per hexamer. Mg(2+) serves as cofactor.

With respect to regulation, activated by cAAA and to a lesser extent cAA and cAAG; cAAA and cAA are products of its cognate CD-NTase. Cyclic nucleotide binding causes hexamerization. Cyclic nucleotide binding causes a series of shifts that enclose the cAAA molecule, enable hexamer formation and juxtapose pairs of active sites to allow dsDNA cleavage. Its function is as follows. Effector DNase of a CBASS antivirus system. CBASS (cyclic oligonucleotide-based antiphage signaling system) provides immunity against bacteriophage. The CD-NTase protein synthesizes cyclic nucleotides in response to infection; these serve as specific second messenger signals. The signals activate a diverse range of effectors, leading to bacterial cell death and thus abortive phage infection. A type III-C(AAA) CBASS system. A cyclic nucleotide-activated dsDNase. In the presence of 3',3',3'-cyclic AMP-AMP-AMP (cAAA), and to a lesser extent 3',3',3'-cyclic AMP-AMP-GMP (cAAG) and cyclic-di-AMP (c-di-AMP), endonucleolytically degrades dsDNA. Binds one cAAA in a pocket on one surface of the trimer; cAAA binding promotes hexamerization, which is necessary for nuclease activation. Also binds c-diAMP or linear di-AMP with lower affinity. The nuclease digests dsDNA to about 50 bp lengths with a 2-base 3' overhang and a consensus recognition site of 5'-Axx|T-3'. DNA has been modeled to contact a pair of juxtaposed active sites (one from each layer of the hexamer), accounting for cleavage on both strands and the 2-base overhang. Functionally, protects E.coli strain JP313 against bacteriophage lambda cI- infection. When the cdnC-cap7-cap6-nucC operon is transformed into a susceptible strain it confers bacteriophage immunity. Mutations in the sensor (Cap7 also called HORMA) or effector proteins (CdnC, NucC) but not the disassembly protein (Cap6 also called Trip13) no longer confer immunity. The presence of the intact operon leads to culture collapse and cell death which occurs before the phage has finished its replication cycle, thus protecting non-infected bacteria by aborting the phage infection and preventing its propagation. The protein is Endodeoxyribonuclease NucC of Escherichia coli (strain MS 115-1).